The sequence spans 440 residues: MESQQLSQHSPISHGSACASVTSKEVQTTQDPLDISASKTEECEKVFTQANSQQPTTPPSAAVPENHHHASPQAAQVPLPQNGPYPQQRMMTPQQANISGWPVYGHPSLMPYPPYQMSPMYAPPGAQSQFTQYPQYVGTHLNTPSPESGNSFPDSSSAKSNMTSTNQHVRPPPILTSPNDFLNWVKIYIKFLQNSNLGDIIPTATRKAVRQMTDDELTFLCHTFQLFALSQFLPTWVKDILSVDYTDIMKILSKSINKMQSDTQEVNDITTLANLHYNGSTPADAFEAEVTNILDRLKNNGIPINNKVACQFIMRGLSGEYKFLRYARHRYIHMTVADLFSDIHSMYEEQQESKRNKSTYRRSPSDEKKDSRTYTNTTKPKSITRNSQKPNNSQSRTARAHNVSTSNNFPGPDNDLIRGSTTEPIQLKNKHDLHLRPGTY.

Composition is skewed to polar residues over residues 1–31 (MESQQLSQHSPISHGSACASVTSKEVQTTQD) and 137–168 (VGTHLNTPSPESGNSFPDSSSAKSNMTSTNQH). Disordered stretches follow at residues 1–75 (MESQ…PQAA), 137–174 (VGTHLNTPSPESGNSFPDSSSAKSNMTSTNQHVRPPPI), and 350–440 (QQES…PGTY). Positions 299-401 (NNGIPINNKV…NSQSRTARAH (103 aa)) are RNA-binding. The segment covering 363-372 (SPSDEKKDSR) has biased composition (basic and acidic residues). The segment covering 373–409 (TYTNTTKPKSITRNSQKPNNSQSRTARAHNVSTSNNF) has biased composition (polar residues). The span at 429–440 (NKHDLHLRPGTY) shows a compositional bias: basic and acidic residues.

As to quaternary structure, homotrimer.

Its subcellular location is the cytoplasm. Its function is as follows. Capsid protein (CA) is the structural component of the virus-like particle (VLP), forming the shell that encapsulates the retrotransposons dimeric RNA genome. The particles are assembled from trimer-clustered units and there are holes in the capsid shells that allow for the diffusion of macromolecules. CA also has nucleocapsid-like chaperone activity, promoting primer tRNA(i)-Met annealing to the multipartite primer-binding site (PBS), dimerization of Ty1 RNA and initiation of reverse transcription. The sequence is that of Transposon Ty1-DR2 Gag polyprotein (TY1A-DR2) from Saccharomyces cerevisiae (strain ATCC 204508 / S288c) (Baker's yeast).